The following is a 427-amino-acid chain: Trigger factor (427 aa).

A PPIase FKBP-type domain is found at 163 to 248 (GDTVVIDFVG…IHEVKTKEVP (86 aa)).

It belongs to the FKBP-type PPIase family. Tig subfamily.

It localises to the cytoplasm. The catalysed reaction is [protein]-peptidylproline (omega=180) = [protein]-peptidylproline (omega=0). Its function is as follows. Involved in protein export. Acts as a chaperone by maintaining the newly synthesized protein in an open conformation. Functions as a peptidyl-prolyl cis-trans isomerase. The polypeptide is Trigger factor (Streptococcus pyogenes serotype M49 (strain NZ131)).